The chain runs to 216 residues: 3-keto-L-gulonate-6-phosphate decarboxylase UlaD (216 aa).

Residue D11 coordinates substrate. E33 and D62 together coordinate Mg(2+). R192 serves as a coordination point for substrate.

Belongs to the HPS/KGPDC family. KGPDC subfamily. As to quaternary structure, homodimer. Mg(2+) serves as cofactor.

It carries out the reaction 3-dehydro-L-gulonate 6-phosphate + H(+) = L-xylulose 5-phosphate + CO2. It functions in the pathway cofactor degradation; L-ascorbate degradation; D-xylulose 5-phosphate from L-ascorbate: step 2/4. Functionally, catalyzes the decarboxylation of 3-keto-L-gulonate-6-P into L-xylulose-5-P. Is involved in the anaerobic L-ascorbate utilization. This chain is 3-keto-L-gulonate-6-phosphate decarboxylase UlaD, found in Shigella boydii serotype 18 (strain CDC 3083-94 / BS512).